The sequence spans 63 residues: Cytochrome b-c1 complex subunit 9 (63 aa).

At 2-21 (AAATLTSKLYSLLFRRTSTF) the chain is on the mitochondrial matrix side. Residues 22-47 (ALTIIVGVMFFERAFDQGADAIYDHI) traverse the membrane as a helical segment. Residues 48–63 (NEGKLWKHIKHKYENK) are Mitochondrial intermembrane-facing.

Belongs to the UQCR10/QCR9 family. As to quaternary structure, component of the ubiquinol-cytochrome c oxidoreductase (cytochrome b-c1 complex, complex III, CIII), a multisubunit enzyme composed of 11 subunits. The complex is composed of 3 respiratory subunits cytochrome b, cytochrome c1 and Rieske protein UQCRFS1, 2 core protein subunits UQCRC1/QCR1 and UQCRC2/QCR2, and 6 low-molecular weight protein subunits UQCRH/QCR6, UQCRB/QCR7, UQCRQ/QCR8, UQCR10/QCR9, UQCR11/QCR10 and subunit 9, the cleavage product of Rieske protein UQCRFS1. The complex exists as an obligatory dimer and forms supercomplexes (SCs) in the inner mitochondrial membrane with NADH-ubiquinone oxidoreductase (complex I, CI) and cytochrome c oxidase (complex IV, CIV), resulting in different assemblies (supercomplex SCI(1)III(2)IV(1) and megacomplex MCI(2)III(2)IV(2)). Interacts with STMP1.

The protein resides in the mitochondrion inner membrane. Its function is as follows. Component of the ubiquinol-cytochrome c oxidoreductase, a multisubunit transmembrane complex that is part of the mitochondrial electron transport chain which drives oxidative phosphorylation. The respiratory chain contains 3 multisubunit complexes succinate dehydrogenase (complex II, CII), ubiquinol-cytochrome c oxidoreductase (cytochrome b-c1 complex, complex III, CIII) and cytochrome c oxidase (complex IV, CIV), that cooperate to transfer electrons derived from NADH and succinate to molecular oxygen, creating an electrochemical gradient over the inner membrane that drives transmembrane transport and the ATP synthase. The cytochrome b-c1 complex catalyzes electron transfer from ubiquinol to cytochrome c, linking this redox reaction to translocation of protons across the mitochondrial inner membrane, with protons being carried across the membrane as hydrogens on the quinol. In the process called Q cycle, 2 protons are consumed from the matrix, 4 protons are released into the intermembrane space and 2 electrons are passed to cytochrome c. The chain is Cytochrome b-c1 complex subunit 9 (UQCR10) from Homo sapiens (Human).